Consider the following 463-residue polypeptide: Matrix remodeling-associated protein 8 (463 aa).

An N-terminal signal peptide occupies residues Met1–Ala19. Residues Val20–Gln362 are Extracellular-facing. 2 Ig-like V-type domains span residues Pro29–Thr173 and Pro176–Thr308. Cystine bridges form between Cys54–Cys153 and Cys202–Cys288. An N-linked (GlcNAc...) asparagine glycan is attached at Asn135. A Phosphoserine modification is found at Ser244. Residues Arg268–Asp270 carry the RGD motif. The segment at Glu309–Leu341 is disordered. Residues Ser321–Gly335 are compositionally biased toward low complexity. Asn324 is a glycosylation site (N-linked (GlcNAc...) asparagine). A helical transmembrane segment spans residues Leu363–Ala383. Over Thr384–Lys463 the chain is Cytoplasmic.

In terms of assembly, homodimer in cis. Does not appear to form trans-homodimers. Interacts with ITGB3; the interaction inhibits ITGAV:ITGB3 heterodimer formation.

The protein resides in the cell membrane. Its subcellular location is the cell junction. The protein localises to the tight junction. It localises to the cytoplasm. It is found in the cell projection. The protein resides in the cilium membrane. Its subcellular location is the nucleus. Functionally, transmembrane protein which can modulate activity of various signaling pathways, probably via binding to integrin ITGAV:ITGB3. Mediates heterophilic cell-cell interactions in vitro. Inhibits osteoclastogenesis downstream of TNFSF11/RANKL and CSF1, where it may function by attenuating signaling via integrin ITGB3 and MAP kinase p38. Plays a role in cartilage formation where it promotes proliferation and maturation of growth plate chondrocytes. Stimulates formation of primary cilia in chondrocytes. Enhances expression of genes involved in the hedgehog signaling pathway in chondrocytes, including the hedgehog signaling molecule IHH; may also promote signaling via the PTHLH/PTHrP pathway. Plays a role in angiogenesis where it suppresses migration of endothelial cells and also promotes their apoptosis. Inhibits VEGF-induced activation of AKT and p38 MAP kinase in endothelial cells. Also inhibits VTN (vitronectin)-mediated integrin ITGAV:ITGB3 signaling and activation of PTK2/FAK. May play a role in the maturation and maintenance of the blood-brain barrier. In Bos taurus (Bovine), this protein is Matrix remodeling-associated protein 8 (MXRA8).